A 162-amino-acid chain; its full sequence is AP-1 complex subunit sigma-1 (162 aa).

Belongs to the adaptor complexes small subunit family. In terms of assembly, adaptor protein complex 1 (AP-1) is a heterotetramer composed of two large adaptins (gamma-type subunit apl4 and beta-type subunit apl2), a medium adaptin (mu-type subunit apm1) and a small adaptin (sigma-type subunit aps1). AP-1 interacts with clathrin.

The protein localises to the cytoplasm. It localises to the nucleus. It is found in the cytoplasmic vesicle. Its subcellular location is the clathrin-coated vesicle membrane. The protein resides in the endosome. The protein localises to the golgi apparatus. Its function is as follows. Component of the AP-1 complex which links clathrin to receptors in coated vesicles. Clathrin-associated protein complexes are believed to interact with the cytoplasmic tails of membrane proteins, leading to their selection and concentration. This Schizosaccharomyces pombe (strain 972 / ATCC 24843) (Fission yeast) protein is AP-1 complex subunit sigma-1 (vas2).